We begin with the raw amino-acid sequence, 466 residues long: Integrator complex subunit 12 (466 aa).

The disordered stretch occupies residues 41–101 (KGNDSVYRPQ…EAEKRSADKM (61 aa)). Positions 69–84 (KASSSTPSSSMLSKPL) are enriched in low complexity. Residues 85–101 (TSEKLKKEAEKRSADKM) are compositionally biased toward basic and acidic residues. Residues 156-212 (GLACVVCRQMTVFSGNQLVECQECHNLYHQDCHKPQVTDKDVNDPRLVWYCARCTRQ) form a PHD-type zinc finger. 2 disordered regions span residues 216–251 (MAQK…ELKA) and 311–466 (GTSS…KLKK). Polar residues-rich tracts occupy residues 218 to 233 (QKNQ…SAVS) and 311 to 329 (GTSS…SVQK). Over residues 338–373 (PSKPGSVSKSGSGGSSSSSTIPIKPLPPLILGKTGL) the composition is skewed to low complexity. Positions 374–386 (SRSMSSDNVSKTG) are enriched in polar residues. The span at 392 to 423 (PSSAGSVSSLSSQLGSNNGSSSAAGSNVTSSN) shows a compositional bias: low complexity. Basic residues predominate over residues 453 to 466 (QMVKKKAAQKKLKK).

Belongs to the Integrator subunit 12 family. In terms of assembly, component of the Integrator complex, composed of core subunits INTS1, INTS2, INTS3, INTS4, INTS5, INTS6, INTS7, INTS8, INTS9/RC74, INTS10, INTS11/CPSF3L, INTS12, INTS13, INTS14 and INTS15. The core complex associates with protein phosphatase 2A subunits PPP2CA and PPP2R1A, to form the Integrator-PP2A (INTAC) complex.

It localises to the nucleus. Component of the integrator complex, a multiprotein complex that terminates RNA polymerase II (Pol II) transcription in the promoter-proximal region of genes. The integrator complex provides a quality checkpoint during transcription elongation by driving premature transcription termination of transcripts that are unfavorably configured for transcriptional elongation: the complex terminates transcription by (1) catalyzing dephosphorylation of the C-terminal domain (CTD) of Pol II subunit POLR2A/RPB1 and SUPT5H/SPT5, (2) degrading the exiting nascent RNA transcript via endonuclease activity and (3) promoting the release of Pol II from bound DNA. The integrator complex is also involved in terminating the synthesis of non-coding Pol II transcripts, such as enhancer RNAs (eRNAs), small nuclear RNAs (snRNAs), telomerase RNAs and long non-coding RNAs (lncRNAs). This is Integrator complex subunit 12 (ints12) from Xenopus tropicalis (Western clawed frog).